Here is a 433-residue protein sequence, read N- to C-terminus: Pyrimidine-nucleoside phosphorylase (433 aa).

A phosphate-binding site is contributed by 81-83 (KHS). Residues G88 and T90 each coordinate K(+). Residues T92, 108-110 (KMS), and T120 contribute to the phosphate site. Positions 168 and 187 each coordinate substrate. Residues L243, A246, and E255 each coordinate K(+).

Belongs to the thymidine/pyrimidine-nucleoside phosphorylase family. In terms of assembly, homodimer. K(+) is required as a cofactor.

It carries out the reaction uridine + phosphate = alpha-D-ribose 1-phosphate + uracil. It catalyses the reaction thymidine + phosphate = 2-deoxy-alpha-D-ribose 1-phosphate + thymine. The enzyme catalyses 2'-deoxyuridine + phosphate = 2-deoxy-alpha-D-ribose 1-phosphate + uracil. Its function is as follows. Catalyzes phosphorolysis of the pyrimidine nucleosides uridine, thymidine and 2'-deoxyuridine with the formation of the corresponding pyrimidine base and ribose-1-phosphate. This is Pyrimidine-nucleoside phosphorylase (pdp) from Geobacillus stearothermophilus (Bacillus stearothermophilus).